The following is a 103-amino-acid chain: UPF0145 protein Rsph17025_2361 (103 aa).

This sequence belongs to the UPF0145 family.

This is UPF0145 protein Rsph17025_2361 from Cereibacter sphaeroides (strain ATCC 17025 / ATH 2.4.3) (Rhodobacter sphaeroides).